The primary structure comprises 419 residues: UDP-N-acetylglucosamine 1-carboxyvinyltransferase (419 aa).

22 to 23 contributes to the phosphoenolpyruvate binding site; the sequence is KN. UDP-N-acetyl-alpha-D-glucosamine is bound at residue R93. C117 acts as the Proton donor in catalysis. C117 carries the post-translational modification 2-(S-cysteinyl)pyruvic acid O-phosphothioketal. UDP-N-acetyl-alpha-D-glucosamine contacts are provided by D307 and I329.

Belongs to the EPSP synthase family. MurA subfamily.

The protein resides in the cytoplasm. It carries out the reaction phosphoenolpyruvate + UDP-N-acetyl-alpha-D-glucosamine = UDP-N-acetyl-3-O-(1-carboxyvinyl)-alpha-D-glucosamine + phosphate. Its pathway is cell wall biogenesis; peptidoglycan biosynthesis. Its function is as follows. Cell wall formation. Adds enolpyruvyl to UDP-N-acetylglucosamine. This Pseudoalteromonas atlantica (strain T6c / ATCC BAA-1087) protein is UDP-N-acetylglucosamine 1-carboxyvinyltransferase.